Reading from the N-terminus, the 408-residue chain is Dihydrolipoyllysine-residue acetyltransferase component of pyruvate dehydrogenase complex (408 aa).

One can recognise a Lipoyl-binding domain in the interval 2 to 78 (PIKILMPALS…PVNSLIAVLS (77 aa)). Position 43 is an N6-lipoyllysine (Lys-43). The Peripheral subunit-binding (PSBD) domain occupies 128 to 165 (FASPLAKRLAKIGDIRLENVQGSGPHGRIVKQDILSYD). His-381 is an active-site residue.

Belongs to the 2-oxoacid dehydrogenase family. Forms a 24-polypeptide structural core with octahedral symmetry. The cofactor is (R)-lipoate.

The enzyme catalyses N(6)-[(R)-dihydrolipoyl]-L-lysyl-[protein] + acetyl-CoA = N(6)-[(R)-S(8)-acetyldihydrolipoyl]-L-lysyl-[protein] + CoA. Its function is as follows. The pyruvate dehydrogenase complex catalyzes the overall conversion of pyruvate to acetyl-CoA and CO(2). It contains multiple copies of three enzymatic components: pyruvate dehydrogenase (E1), dihydrolipoamide acetyltransferase (E2) and lipoamide dehydrogenase (E3). This chain is Dihydrolipoyllysine-residue acetyltransferase component of pyruvate dehydrogenase complex (pdhC), found in Rickettsia prowazekii (strain Madrid E).